Reading from the N-terminus, the 424-residue chain is uncharacterized protein (424 aa).

The protein belongs to the serpin family.

This is an uncharacterized protein from Methanosarcina acetivorans (strain ATCC 35395 / DSM 2834 / JCM 12185 / C2A).